The following is a 239-amino-acid chain: Endolytic peptidoglycan transglycosylase RlpA (239 aa).

The signal sequence occupies residues 1 to 25 (MTLTRKTLFLLTAAFGIHSFQTASA). The SPOR domain maps to 160 to 239 (VAENKDIFID…GMVRAVLTAG (80 aa)).

It belongs to the RlpA family.

Its function is as follows. Lytic transglycosylase with a strong preference for naked glycan strands that lack stem peptides. This is Endolytic peptidoglycan transglycosylase RlpA from Neisseria meningitidis serogroup A / serotype 4A (strain DSM 15465 / Z2491).